A 191-amino-acid polypeptide reads, in one-letter code: Thymidylate kinase (191 aa).

7–14 is an ATP binding site; the sequence is GVDGAGKS.

This sequence belongs to the thymidylate kinase family.

The enzyme catalyses dTMP + ATP = dTDP + ADP. Phosphorylation of dTMP to form dTDP in both de novo and salvage pathways of dTTP synthesis. This Helicobacter pylori (strain Shi470) protein is Thymidylate kinase.